The chain runs to 1435 residues: Guanine nucleotide exchange factor LTE1 (1435 aa).

Positions 25–157 (VSKPVNSADL…SCIINLKKNW (133 aa)) constitute an N-terminal Ras-GEF domain. The tract at residues 235–256 (KLQSSNSSKNQRSPSMLLFPDN) is disordered. Low complexity predominate over residues 237 to 249 (QSSNSSKNQRSPS). Residue Ser271 is modified to Phosphoserine. The interval 338-365 (QSGTLQGTSTTSSLDNNSNSNSRSNTSS) is disordered. At Ser559 the chain carries Phosphoserine. Over residues 582 to 606 (KDNSSSRTDENGPQRLLFHETDKTN) the composition is skewed to basic and acidic residues. Residues 582 to 689 (KDNSSSRTDE…VRNIVNNTDS (108 aa)) are disordered. The segment covering 621-632 (SQSQKSMTSSPL) has biased composition (polar residues). The segment covering 654–667 (SITYSYDSELSSSS) has biased composition (low complexity). At Ser689 the chain carries Phosphoserine. Thr691 carries the phosphothreonine modification. A compositionally biased stretch (basic and acidic residues) spans 723–744 (EKNYDNKENQESEYESTKKLDN). Residues 723-747 (EKNYDNKENQESEYESTKKLDNSLD) are disordered. Ser808 and Ser810 each carry phosphoserine. A disordered region spans residues 851-871 (AQNSPLKQTQNPQREFPNGTS). 2 positions are modified to phosphoserine: Ser1028 and Ser1109. One can recognise a Ras-GEF domain in the interval 1194–1434 (DSLSVAQQMT…LTQEEINELS (241 aa)).

It belongs to the LTE1 family. Interacts with CDC24, CDC42, KEL1, KEL2, RAS2 and TEM1. Post-translationally, phosphorylated by CDC28 in a cell cycle-dependent manner and in response to nocodazole. Dephosphorylion by CDC14 triggers LTE1 release from bud cortex during the exit of mitosis.

It localises to the cytoplasm. The protein resides in the bud. GDP-GTP exchange factor for TEM1, a Ras-like protein, component of the mitotic exit network (MEN). Activation of TEM1 by LTE1 in the bud ultimately leads to activation of CDC15 followed by the release of CDC14 from the nucleolus, which then inactivates cyclin-dependent kinases (CDKs) activity by several mechanism. Required for TEM1 localization to the bud cortex during mitotic exit. Fine-tunes the timing of the mitotic exit and couples this event with cytokinesis. In terms of biological role, involved in proprotein-processing like proalpha factor-processing in the secretory pathway. This is Guanine nucleotide exchange factor LTE1 (LTE1) from Saccharomyces cerevisiae (strain ATCC 204508 / S288c) (Baker's yeast).